We begin with the raw amino-acid sequence, 398 residues long: Chalcone synthase 1 (398 aa).

Cysteine 167 is an active-site residue.

The protein belongs to the thiolase-like superfamily. Chalcone/stilbene synthases family.

It carries out the reaction (E)-4-coumaroyl-CoA + 3 malonyl-CoA + 3 H(+) = 2',4,4',6'-tetrahydroxychalcone + 3 CO2 + 4 CoA. It functions in the pathway secondary metabolite biosynthesis; flavonoid biosynthesis. Its function is as follows. The primary product of this enzyme is 4,2',4',6'-tetrahydroxychalcone (also termed naringenin-chalcone or chalcone) which can under specific conditions spontaneously isomerize into naringenin. This chain is Chalcone synthase 1 (CHS1), found in Gerbera hybrida (Daisy).